A 292-amino-acid chain; its full sequence is SSLEERRAARAARRRKQDENEGGEEQEETTSRRSRRRQQEDEEDSYSAPAEPAYDAEAENRRRQQQEEEEAAARAAEEEYNRQQEELRRQRQEEERQRREEEQRRQQEEEERLRLEREEQEREEEARRMAEEQKKKKKKGLGGLSPEKKKMLKKLIMQKAAEDLANEAKAKAEAKEKYINDLVPKFSTDGKDVAALQALCKDFHKRLASLEEDVYDWEAKIRKQDFEINELTLKVNDTKGKFVKPVLRKVNKTESKLDKIQRKEAKKSDFRDNLKSSREHEADKEGGEGENE.

Position 1 is an N-acetylserine (S1). Residues 1–149 (SSLEERRAAR…GLGGLSPEKK (149 aa)) form a disordered region. Low complexity predominate over residues 46–55 (YSAPAEPAYD). Positions 58-134 (AENRRRQQQE…EARRMAEEQK (77 aa)) are enriched in basic and acidic residues. Residues 237–250 (DTKGKFVKPVLRKV) are actin-binding. Positions 255–292 (SKLDKIQRKEAKKSDFRDNLKSSREHEADKEGGEGENE) are disordered.

The protein belongs to the troponin I family.

Troponin I is the inhibitory subunit of troponin, the thin filament regulatory complex which confers calcium-sensitivity to striated muscle actomyosin ATPase activity. The polypeptide is Troponin I (Chlamys nipponensis akazara (Akazara scallop)).